The chain runs to 488 residues: Probable cytosol aminopeptidase (488 aa).

Mn(2+) contacts are provided by Lys251 and Asp256. The active site involves Lys263. Mn(2+) contacts are provided by Asp274, Asp333, and Glu335. Arg337 is an active-site residue.

This sequence belongs to the peptidase M17 family. Requires Mn(2+) as cofactor.

Its subcellular location is the cytoplasm. It carries out the reaction Release of an N-terminal amino acid, Xaa-|-Yaa-, in which Xaa is preferably Leu, but may be other amino acids including Pro although not Arg or Lys, and Yaa may be Pro. Amino acid amides and methyl esters are also readily hydrolyzed, but rates on arylamides are exceedingly low.. The enzyme catalyses Release of an N-terminal amino acid, preferentially leucine, but not glutamic or aspartic acids.. Presumably involved in the processing and regular turnover of intracellular proteins. Catalyzes the removal of unsubstituted N-terminal amino acids from various peptides. The chain is Probable cytosol aminopeptidase from Cenarchaeum symbiosum (strain A).